The following is a 92-amino-acid chain: uncharacterized protein (92 aa).

To M.jannaschii MJ0782.1.

This is an uncharacterized protein from Methanothermobacter thermautotrophicus (strain ATCC 29096 / DSM 1053 / JCM 10044 / NBRC 100330 / Delta H) (Methanobacterium thermoautotrophicum).